Here is a 594-residue protein sequence, read N- to C-terminus: Aspartate--tRNA ligase (594 aa).

Glu171 contacts L-aspartate. The interval 195–198 is aspartate; the sequence is QLFK. Position 217 (Arg217) interacts with L-aspartate. Residues 217–219 and Gln226 each bind ATP; that span reads RDE. Residue His449 participates in L-aspartate binding. Glu483 lines the ATP pocket. Arg490 contributes to the L-aspartate binding site. Residue 535–538 coordinates ATP; sequence GLDR.

Belongs to the class-II aminoacyl-tRNA synthetase family. Type 1 subfamily. In terms of assembly, homodimer.

The protein resides in the cytoplasm. It catalyses the reaction tRNA(Asp) + L-aspartate + ATP = L-aspartyl-tRNA(Asp) + AMP + diphosphate. In terms of biological role, catalyzes the attachment of L-aspartate to tRNA(Asp) in a two-step reaction: L-aspartate is first activated by ATP to form Asp-AMP and then transferred to the acceptor end of tRNA(Asp). This chain is Aspartate--tRNA ligase, found in Proteus mirabilis (strain HI4320).